Consider the following 405-residue polypeptide: MFLIRLSRHNPSSFTLLTRRLHDQTISSSRLRDLYNFQSPPPLSSSASENPDFNQKNNNKKKPKPQYRPPSSLEGVKTVHSDLPFDFRFSYTESCSNVRPIGLREPKYSPFGPDRLDREWTGVCAPAVNPKVESVDGVEDPKLEEKRRKVREKIQGASLTEAERKFLVELCQRNKTKRQVNLGRDGLTHNMLNDVYNHWKHAEAVRVKCLGVPTLDMKNVIFHLEDKTFGQVVSKHSGTLVLYRGRNYDPKKRPKIPLMLWKPHEPVYPRLIKTTIDGLSIDETKAMRKKGLAVPALTKLAKNGYYGSLVPMVRDAFLVSELVRIDCLGLERKDYKKIGAKLRDLVPCILVTFDKEQVVIWRGKDYKPPKEDDEYSSFIHRESSIDSDVDLSCSRGAQDSPDETT.

The transit peptide at 1–20 (MFLIRLSRHNPSSFTLLTRR) directs the protein to the mitochondrion. Positions 32–75 (RDLYNFQSPPPLSSSASENPDFNQKNNNKKKPKPQYRPPSSLEG) are disordered. CRM domains follow at residues 157-255 (ASLT…KRPK) and 277-373 (DGLS…KEDD). The disordered stretch occupies residues 384–405 (SIDSDVDLSCSRGAQDSPDETT).

In terms of assembly, part of large ribonucleo-protein complexes that include group IIB introns.

The protein resides in the mitochondrion. May be involved in the splicing of group IIB introns in mitochondria. The sequence is that of CRS2-associated factor 1, mitochondrial from Arabidopsis thaliana (Mouse-ear cress).